We begin with the raw amino-acid sequence, 428 residues long: C4-dicarboxylate transport protein (428 aa).

8 consecutive transmembrane segments (helical) span residues 8–28 (VLYV…HYYP), 44–64 (LIKM…IAGM), 78–98 (LLYF…ATHI), 148–168 (GEIL…AHLG), 184–204 (VLFG…FGAM), 222–242 (LIGT…GAIA), 307–327 (IYMT…LTWM), and 355–375 (AATL…ILGI).

This sequence belongs to the dicarboxylate/amino acid:cation symporter (DAACS) (TC 2.A.23) family.

Its subcellular location is the cell inner membrane. Functionally, responsible for the transport of dicarboxylates such as succinate, fumarate, and malate from the periplasm across the membrane. The protein is C4-dicarboxylate transport protein of Burkholderia pseudomallei (strain 1106a).